A 314-amino-acid polypeptide reads, in one-letter code: MNKDNTLYCSAYRIAFFSEIGIGISANSCLLLFHTFMFIRGHRPRLTDLPIGLVALIHLVMLLLAAYITEDFFMSSGGWDDITCKLFIFLHRFFRSLSVCDTCMLSVFQAIILCPQSSHLAKFKLNSPHHLSCFFIFMSIFYTSISSHILIAAIATQNLTSVNLIYITKSCSFLPMSSSMQRTFSTLLAFRNVFLIGLMGLSTCYMATLLCRHKTRSQQLQNSKLSPKATPEQRAIWTILMLMSFFLIISTFDSIMTYSRTIFQGNQSLYCVQIPVAHGYAAFSPLLVLNNEKRLTSLMISMYDRIVRLESLCS.

At 1–18 (MNKDNTLYCSAYRIAFFS) the chain is on the extracellular side. A helical membrane pass occupies residues 19–39 (EIGIGISANSCLLLFHTFMFI). Topologically, residues 40–48 (RGHRPRLTD) are cytoplasmic. A helical membrane pass occupies residues 49–69 (LPIGLVALIHLVMLLLAAYIT). Residues 70–88 (EDFFMSSGGWDDITCKLFI) lie on the Extracellular side of the membrane. Cysteine 84 and cysteine 171 are oxidised to a cystine. The helical transmembrane segment at 89-113 (FLHRFFRSLSVCDTCMLSVFQAIIL) threads the bilayer. At 114–133 (CPQSSHLAKFKLNSPHHLSC) the chain is on the cytoplasmic side. A helical membrane pass occupies residues 134–154 (FFIFMSIFYTSISSHILIAAI). The Extracellular portion of the chain corresponds to 155-186 (ATQNLTSVNLIYITKSCSFLPMSSSMQRTFST). Residue asparagine 158 is glycosylated (N-linked (GlcNAc...) asparagine). Residues 187–207 (LLAFRNVFLIGLMGLSTCYMA) traverse the membrane as a helical segment. Residues 208-235 (TLLCRHKTRSQQLQNSKLSPKATPEQRA) lie on the Cytoplasmic side of the membrane. A helical transmembrane segment spans residues 236 to 256 (IWTILMLMSFFLIISTFDSIM). Over 257–268 (TYSRTIFQGNQS) the chain is Extracellular. N-linked (GlcNAc...) asparagine glycosylation occurs at asparagine 266. The chain crosses the membrane as a helical span at residues 269 to 289 (LYCVQIPVAHGYAAFSPLLVL). Over 290–314 (NNEKRLTSLMISMYDRIVRLESLCS) the chain is Cytoplasmic.

This sequence belongs to the G-protein coupled receptor 1 family.

It localises to the cell membrane. Functionally, putative pheromone receptor implicated in the regulation of social as well as reproductive behavior. This Rattus norvegicus (Rat) protein is Vomeronasal type-1 receptor 95 (Vom1r95).